The chain runs to 398 residues: 1-deoxy-D-xylulose 5-phosphate reductoisomerase (398 aa).

Residues T14, G15, S16, I17, Q42, and N128 each coordinate NADPH. Position 129 (K129) interacts with 1-deoxy-D-xylulose 5-phosphate. An NADPH-binding site is contributed by E130. D154 provides a ligand contact to Mn(2+). 1-deoxy-D-xylulose 5-phosphate-binding residues include S155, E156, S185, and H208. Mn(2+) is bound at residue E156. G214 is a binding site for NADPH. 1-deoxy-D-xylulose 5-phosphate is bound by residues S221, N226, K227, and E230. E230 contacts Mn(2+).

This sequence belongs to the DXR family. It depends on Mg(2+) as a cofactor. Mn(2+) serves as cofactor.

The catalysed reaction is 2-C-methyl-D-erythritol 4-phosphate + NADP(+) = 1-deoxy-D-xylulose 5-phosphate + NADPH + H(+). It functions in the pathway isoprenoid biosynthesis; isopentenyl diphosphate biosynthesis via DXP pathway; isopentenyl diphosphate from 1-deoxy-D-xylulose 5-phosphate: step 1/6. Its function is as follows. Catalyzes the NADPH-dependent rearrangement and reduction of 1-deoxy-D-xylulose-5-phosphate (DXP) to 2-C-methyl-D-erythritol 4-phosphate (MEP). This chain is 1-deoxy-D-xylulose 5-phosphate reductoisomerase, found in Dechloromonas aromatica (strain RCB).